An 891-amino-acid chain; its full sequence is Microtubule-associated protein 10 (891 aa).

4 disordered regions span residues 325-355 (AAVQ…PPQI), 401-457 (EDKG…VTKG), 504-679 (SWKG…KSSC), and 702-844 (TTEN…SNLS). A compositionally biased stretch (low complexity) spans 407-417 (PSTKSTSPSES). 2 stretches are compositionally biased toward polar residues: residues 509–520 (VSSSAAESQMSP) and 527–544 (PTDS…SQLP). 2 stretches are compositionally biased toward basic and acidic residues: residues 577–592 (STTK…KQEM) and 645–658 (TVDK…DGRQ). Polar residues-rich tracts occupy residues 665–679 (ADTS…KSSC), 702–718 (TTEN…SSTG), 726–749 (SRAS…SSVL), 776–790 (EASS…SQWT), and 826–844 (KSQS…SNLS).

As to quaternary structure, interacts (via middle region) with microtubules.

It is found in the cytoplasm. Its subcellular location is the cytoskeleton. The protein localises to the spindle pole. The protein resides in the microtubule organizing center. It localises to the centrosome. It is found in the midbody. Functionally, microtubule-associated protein (MAP) that plays a role in the regulation of cell division; promotes microtubule stability and participates in the organization of the spindle midzone and normal progress of cytokinesis. The chain is Microtubule-associated protein 10 (Map10) from Mus musculus (Mouse).